Here is a 124-residue protein sequence, read N- to C-terminus: Ribonuclease pancreatic (124 aa).

The span at 1–13 shows a compositional bias: basic and acidic residues; sequence KESAAAKFERQHM. The interval 1–24 is disordered; sequence KESAAAKFERQHMDSSTSSASSSN. Substrate contacts are provided by Lys-7 and Arg-10. The active-site Proton acceptor is His-12. Disulfide bonds link Cys-26–Cys-84, Cys-40–Cys-95, Cys-58–Cys-110, and Cys-65–Cys-72. Substrate contacts are provided by residues 41–45, Lys-66, and Arg-85; that span reads KPVNT. His-119 acts as the Proton donor in catalysis.

Belongs to the pancreatic ribonuclease family. Monomer. Interacts with and forms tight 1:1 complexes with RNH1. Dimerization of two such complexes may occur. Interaction with RNH1 inhibits this protein. As to expression, pancreas.

The protein localises to the secreted. The catalysed reaction is an [RNA] containing cytidine + H2O = an [RNA]-3'-cytidine-3'-phosphate + a 5'-hydroxy-ribonucleotide-3'-[RNA].. It catalyses the reaction an [RNA] containing uridine + H2O = an [RNA]-3'-uridine-3'-phosphate + a 5'-hydroxy-ribonucleotide-3'-[RNA].. Its function is as follows. Endonuclease that catalyzes the cleavage of RNA on the 3' side of pyrimidine nucleotides. Acts on single-stranded and double-stranded RNA. This is Ribonuclease pancreatic (RNASE1) from Connochaetes taurinus (Blue wildebeest).